A 122-amino-acid polypeptide reads, in one-letter code: MIQQESRLKVADNSGAREILTIKVLGGSKRRYAGIGDIIVATVKQATPGGVVKKGDVVKAVVVRTKSRVRRNDGSYISFDENAAVLIKDDKSPQGTRIFGPVARELRDNDYMKIISLAPEVL.

This sequence belongs to the universal ribosomal protein uL14 family. Part of the 50S ribosomal subunit. Forms a cluster with proteins L3 and L19. In the 70S ribosome, L14 and L19 interact and together make contacts with the 16S rRNA in bridges B5 and B8.

Functionally, binds to 23S rRNA. Forms part of two intersubunit bridges in the 70S ribosome. The polypeptide is Large ribosomal subunit protein uL14 (Levilactobacillus brevis (strain ATCC 367 / BCRC 12310 / CIP 105137 / JCM 1170 / LMG 11437 / NCIMB 947 / NCTC 947) (Lactobacillus brevis)).